Consider the following 86-residue polypeptide: Defensin-like protein 97 (86 aa).

The N-terminal stretch at 1-27 (MGSLRVSTFAVAVVVCLSILLMSPTDG) is a signal peptide. Intrachain disulfides connect cysteine 31–cysteine 74, cysteine 38–cysteine 60, cysteine 44–cysteine 71, and cysteine 48–cysteine 73.

This sequence belongs to the DEFL family.

It is found in the secreted. This Arabidopsis thaliana (Mouse-ear cress) protein is Defensin-like protein 97 (LCR85).